We begin with the raw amino-acid sequence, 392 residues long: MRKKLTALVLSALPLAAVADVSLYGEIKAGVEGRNYQLQLTEAQAANGGASGQVKVTKVTKAKSRIRTKISDFGSFIGFKGSEDLGDGLKAVWQLEQDVSVAGGGATQWGNRESFIGLAGEFGTLRAGRVANQFDDASQAIDPWDSNNDVASQLGIFKRHDDMPVSVRYDSPEFSGFSGSVQFVPIQNSKSAYTPAYYTKDTNNNLTLVPAVVGKPGSDVYYAGLNYKNGGFAGNYAFKYARHANVGRNAFELFLIGSGSDQAKGTDPLKNHQVHRLTGGYEEGGLNLALAAQLDLSENGDKTKNSTTEIAATASYRFGNAVPRISYAHGFDFIERGKKGENTSYDQIIAGVDYDFSKRTSAIVSGAWLKRNTGIGNYTQINAASVGLRHKF.

Positions 1 to 19 (MRKKLTALVLSALPLAAVA) are cleaved as a signal peptide.

It belongs to the Gram-negative porin family. In terms of assembly, homotrimer.

Its subcellular location is the cell outer membrane. Serves as a slightly cation selective porin. Major antigen on the gonococcal cell surface and it may have pathogenic properties in addition to its porin activity. The protein is Major outer membrane protein P.IA (porA) of Neisseria meningitidis serogroup B / serotype 15 (strain H44/76).